The following is a 332-amino-acid chain: Biotin synthase (332 aa).

The 228-residue stretch at arginine 51–arginine 278 folds into the Radical SAM core domain. [4Fe-4S] cluster-binding residues include cysteine 66, cysteine 70, and cysteine 73. Residues cysteine 110, cysteine 141, cysteine 201, and arginine 273 each coordinate [2Fe-2S] cluster.

Belongs to the radical SAM superfamily. Biotin synthase family. Homodimer. [4Fe-4S] cluster serves as cofactor. Requires [2Fe-2S] cluster as cofactor.

It carries out the reaction (4R,5S)-dethiobiotin + (sulfur carrier)-SH + 2 reduced [2Fe-2S]-[ferredoxin] + 2 S-adenosyl-L-methionine = (sulfur carrier)-H + biotin + 2 5'-deoxyadenosine + 2 L-methionine + 2 oxidized [2Fe-2S]-[ferredoxin]. It functions in the pathway cofactor biosynthesis; biotin biosynthesis; biotin from 7,8-diaminononanoate: step 2/2. Its function is as follows. Catalyzes the conversion of dethiobiotin (DTB) to biotin by the insertion of a sulfur atom into dethiobiotin via a radical-based mechanism. This is Biotin synthase from Haemophilus influenzae (strain PittGG).